A 427-amino-acid polypeptide reads, in one-letter code: MRALSANLFAVLLMCALASVFYVWSALENRLERHKRGSSVPDGGSFHQGPSEDHSAKTFRALLAVPVAQRQNSAGRSKAQNLTNPSAFVGSRDYHVNGDDERSAQREGPVKLGYPVDDGIFWSNWLEDVLPVRFTEGYAEAWRSKARTSPVVKLEPGCGRISNQLATFADGTKACVRYGINADQVQGETLTYYLASLLGITNLPPLVLSQLNGDSAQWVAVRTRINNLQWSDRAVVSLTEWISNLTGVVTPAPLRQESSGLLPALRCFENKTTAELLELMQWSDLIVFDYLTANFDRLVSNLFSLQWDPHVMERDTNNLLKTPHGDLVFIDNEAGLVHGFRVLNMWEKYHHSVLSSVCVFRKRTMQRVAELHRRRDSRQRLLELYRDSEPLSQELGFLSDEHAAVLQDRIDQLYKHIMQCKEKYNQL.

An N-terminal signal peptide occupies residues 1–18 (MRALSANLFAVLLMCALA). Residues N81, N244, and N270 are each glycosylated (N-linked (GlcNAc...) asparagine).

The protein localises to the secreted. Its function is as follows. May act as an inhibitor of dendrite extension and branching. This Xiphophorus maculatus (Southern platyfish) protein is Four-jointed box protein 1 (fjx1).